The primary structure comprises 251 residues: Phosphate import ATP-binding protein PstB (251 aa).

The 242-residue stretch at 5–246 (IKIRGVNFFY…PKDKRTEDYI (242 aa)) folds into the ABC transporter domain. 37–44 (GPSGCGKS) contributes to the ATP binding site.

It belongs to the ABC transporter superfamily. Phosphate importer (TC 3.A.1.7) family. The complex is composed of two ATP-binding proteins (PstB), two transmembrane proteins (PstC and PstA) and a solute-binding protein (PstS).

The protein resides in the cell membrane. It catalyses the reaction phosphate(out) + ATP + H2O = ADP + 2 phosphate(in) + H(+). Its function is as follows. Part of the ABC transporter complex PstSACB involved in phosphate import. Responsible for energy coupling to the transport system. The polypeptide is Phosphate import ATP-binding protein PstB (Dehalococcoides mccartyi (strain ATCC BAA-2266 / KCTC 15142 / 195) (Dehalococcoides ethenogenes (strain 195))).